The following is a 473-amino-acid chain: Ribulose bisphosphate carboxylase large chain (473 aa).

Positions Met-1–Ser-2 are excised as a propeptide. The residue at position 3 (Pro-3) is an N-acetylproline. Lys-14 is subject to N6,N6,N6-trimethyllysine. 2 residues coordinate substrate: Asn-123 and Thr-173. The Proton acceptor role is filled by Lys-175. Lys-177 is a binding site for substrate. Residues Lys-201, Asp-203, and Glu-204 each coordinate Mg(2+). Position 201 is an N6-carboxylysine (Lys-201). Catalysis depends on His-294, which acts as the Proton acceptor. Residues Arg-295, His-327, and Ser-379 each contribute to the substrate site.

It belongs to the RuBisCO large chain family. Type I subfamily. In terms of assembly, heterohexadecamer of 8 large chains and 8 small chains; disulfide-linked. The disulfide link is formed within the large subunit homodimers. The cofactor is Mg(2+). In terms of processing, the disulfide bond which can form in the large chain dimeric partners within the hexadecamer appears to be associated with oxidative stress and protein turnover.

The protein localises to the plastid. It is found in the chloroplast. The enzyme catalyses 2 (2R)-3-phosphoglycerate + 2 H(+) = D-ribulose 1,5-bisphosphate + CO2 + H2O. It catalyses the reaction D-ribulose 1,5-bisphosphate + O2 = 2-phosphoglycolate + (2R)-3-phosphoglycerate + 2 H(+). RuBisCO catalyzes two reactions: the carboxylation of D-ribulose 1,5-bisphosphate, the primary event in carbon dioxide fixation, as well as the oxidative fragmentation of the pentose substrate in the photorespiration process. Both reactions occur simultaneously and in competition at the same active site. The protein is Ribulose bisphosphate carboxylase large chain of Sesbania sesban (Egyptian riverhemp).